Reading from the N-terminus, the 255-residue chain is MTARPDSDQDMPLVAHLTELRSRLLRSVAAVLLIFAALFYFAQDIYALVSAPLRAYLPEGATMIATGVASPFLAPFKLTLMISLFLAMPVVLHQVWGFIAPGLYQHEKRIAMPLMASSVLLFYAGMAFAYFVVFPIMFGFFASVTPEGVAMMTDIGQYLDFVLTLFFAFGVAFEVPVATFLLIWVGIVDVASLRNSRPYVIVGCFVVGMVLTPPDVFSQTLLAVPMWLLFEIGVFFGARIRHREEPAASDGPSQP.

A run of 7 helical transmembrane segments spans residues 28–48, 56–76, 80–100, 121–141, 165–185, 195–212, and 216–236; these read VAAV…IYAL, YLPE…LAPF, LMIS…GFIA, LFYA…FGFF, LFFA…LIWV, NSRP…MVLT, and VFSQ…GVFF.

Belongs to the TatC family. The Tat system comprises two distinct complexes: a TatABC complex, containing multiple copies of TatA, TatB and TatC subunits, and a separate TatA complex, containing only TatA subunits. Substrates initially bind to the TatABC complex, which probably triggers association of the separate TatA complex to form the active translocon.

It is found in the cell membrane. In terms of biological role, part of the twin-arginine translocation (Tat) system that transports large folded proteins containing a characteristic twin-arginine motif in their signal peptide across membranes. Together with TatB, TatC is part of a receptor directly interacting with Tat signal peptides. The chain is Sec-independent protein translocase protein TatC from Azotobacter chroococcum mcd 1.